Reading from the N-terminus, the 144-residue chain is UPF0299 membrane protein MS1271 (144 aa).

4 helical membrane passes run Ile5–Ile25, Leu28–Thr48, Val57–Val77, and Ser92–Gly112.

This sequence belongs to the UPF0299 family.

It localises to the cell inner membrane. This is UPF0299 membrane protein MS1271 from Mannheimia succiniciproducens (strain KCTC 0769BP / MBEL55E).